The following is a 444-amino-acid chain: Methylenetetrahydrofolate--tRNA-(uracil-5-)-methyltransferase TrmFO (444 aa).

Gly9 to Gly14 contributes to the FAD binding site.

The protein belongs to the MnmG family. TrmFO subfamily. FAD serves as cofactor.

It localises to the cytoplasm. The enzyme catalyses uridine(54) in tRNA + (6R)-5,10-methylene-5,6,7,8-tetrahydrofolate + NADH + H(+) = 5-methyluridine(54) in tRNA + (6S)-5,6,7,8-tetrahydrofolate + NAD(+). It carries out the reaction uridine(54) in tRNA + (6R)-5,10-methylene-5,6,7,8-tetrahydrofolate + NADPH + H(+) = 5-methyluridine(54) in tRNA + (6S)-5,6,7,8-tetrahydrofolate + NADP(+). Its function is as follows. Catalyzes the folate-dependent formation of 5-methyl-uridine at position 54 (M-5-U54) in all tRNAs. The sequence is that of Methylenetetrahydrofolate--tRNA-(uracil-5-)-methyltransferase TrmFO from Cereibacter sphaeroides (strain KD131 / KCTC 12085) (Rhodobacter sphaeroides).